A 359-amino-acid chain; its full sequence is Alanine racemase (359 aa).

Lys-35 serves as the catalytic Proton acceptor; specific for D-alanine. Residue Lys-35 is modified to N6-(pyridoxal phosphate)lysine. Arg-130 is a substrate binding site. Tyr-255 serves as the catalytic Proton acceptor; specific for L-alanine. Met-303 contacts substrate.

Belongs to the alanine racemase family. Pyridoxal 5'-phosphate is required as a cofactor.

The enzyme catalyses L-alanine = D-alanine. The protein operates within amino-acid biosynthesis; D-alanine biosynthesis; D-alanine from L-alanine: step 1/1. In terms of biological role, catalyzes the interconversion of L-alanine and D-alanine. May also act on other amino acids. This chain is Alanine racemase (alr), found in Janthinobacterium sp. (strain Marseille) (Minibacterium massiliensis).